Here is a 308-residue protein sequence, read N- to C-terminus: MQSLSFPPNRRTPRLAPPRRETGRRDPAPSRWAYRAQRLWLTPMFRTALRVGLPIVGVLLVVALIFASADRRAAMAGAFTGLVDSFQQRPEFMVTLLSVDGASPELSDRIRATLALKLPLSSFDIDLTAARARIESIDAVAQAEVRVRSGGLLEVRVTEREPAIIWRRAANLVLLDGTGRRVDDLAFRSERGDLAVIAGEGAERAVPEALEILAAARPILERIRGLVRMGERRWDIVLDRGQRIQLPVEEPVAAVERMIALDEAEDLLDRDVISVDLRIKDRPVLRLAPYALNAVRRARGIDTSGSDL.

The tract at residues 1–28 (MQSLSFPPNRRTPRLAPPRRETGRRDPA) is disordered. Residues 1-46 (MQSLSFPPNRRTPRLAPPRRETGRRDPAPSRWAYRAQRLWLTPMFR) lie on the Cytoplasmic side of the membrane. Over residues 18-28 (PRRETGRRDPA) the composition is skewed to basic and acidic residues. A helical membrane pass occupies residues 47–67 (TALRVGLPIVGVLLVVALIFA). Topologically, residues 68–308 (SADRRAAMAG…RGIDTSGSDL (241 aa)) are periplasmic. One can recognise a POTRA domain in the interval 92–160 (FMVTLLSVDG…GLLEVRVTER (69 aa)).

This sequence belongs to the FtsQ/DivIB family. FtsQ subfamily.

The protein localises to the cell inner membrane. Essential cell division protein. This chain is Cell division protein FtsQ, found in Cereibacter sphaeroides (strain ATCC 17023 / DSM 158 / JCM 6121 / CCUG 31486 / LMG 2827 / NBRC 12203 / NCIMB 8253 / ATH 2.4.1.) (Rhodobacter sphaeroides).